Here is a 234-residue protein sequence, read N- to C-terminus: Glutathione S-transferase U11 (234 aa).

The 80-residue stretch at 11-90 folds into the GST N-terminal domain; sequence EYVKLLGAWP…YVDETWLSGP (80 aa). Residues 21-22, 47-48, 61-62, and 74-75 each bind glutathione; these read SP, LS, QI, and ES. The region spanning 96-228 is the GST C-terminal domain; that stretch reads DPFDRAVARF…KLVQFARLKF (133 aa).

This sequence belongs to the GST superfamily. Tau family.

It localises to the cytoplasm. The protein resides in the cytosol. It catalyses the reaction RX + glutathione = an S-substituted glutathione + a halide anion + H(+). Functionally, may be involved in the conjugation of reduced glutathione to a wide number of exogenous and endogenous hydrophobic electrophiles and have a detoxification role against certain herbicides. This is Glutathione S-transferase U11 (GSTU11) from Arabidopsis thaliana (Mouse-ear cress).